A 560-amino-acid polypeptide reads, in one-letter code: Mitogen-activated protein kinase kinase kinase 3 (560 aa).

Residues 70–91 (KRQSSSSSDNTSDKEEVETEET) form a disordered region. In terms of domain architecture, Protein kinase spans 303–557 (WLKGQLLGRG…AAELLHHPFV (255 aa)). ATP-binding positions include 309-317 (LGRGSYASV) and K331. D426 acts as the Proton acceptor in catalysis.

It belongs to the protein kinase superfamily. STE Ser/Thr protein kinase family. MAP kinase kinase kinase subfamily. Expressed at low levels in roots, stems, siliques, leaves, seedlings and flower buds.

The enzyme catalyses L-seryl-[protein] + ATP = O-phospho-L-seryl-[protein] + ADP + H(+). The catalysed reaction is L-threonyl-[protein] + ATP = O-phospho-L-threonyl-[protein] + ADP + H(+). The chain is Mitogen-activated protein kinase kinase kinase 3 from Arabidopsis thaliana (Mouse-ear cress).